Reading from the N-terminus, the 387-residue chain is tRNA N6-adenosine threonylcarbamoyltransferase (387 aa).

Residues histidine 112 and histidine 116 each coordinate Fe cation. Substrate contacts are provided by residues 134–138, aspartate 167, glycine 180, and asparagine 325; that span reads LASGG. A Fe cation-binding site is contributed by aspartate 353.

The protein belongs to the KAE1 / TsaD family. Fe(2+) is required as a cofactor.

It is found in the cytoplasm. It catalyses the reaction L-threonylcarbamoyladenylate + adenosine(37) in tRNA = N(6)-L-threonylcarbamoyladenosine(37) in tRNA + AMP + H(+). Required for the formation of a threonylcarbamoyl group on adenosine at position 37 (t(6)A37) in tRNAs that read codons beginning with adenine. Is involved in the transfer of the threonylcarbamoyl moiety of threonylcarbamoyl-AMP (TC-AMP) to the N6 group of A37, together with TsaE and TsaB. TsaD likely plays a direct catalytic role in this reaction. This is tRNA N6-adenosine threonylcarbamoyltransferase from Rickettsia typhi (strain ATCC VR-144 / Wilmington).